A 217-amino-acid chain; its full sequence is Large ribosomal subunit protein uL1 (217 aa).

Belongs to the universal ribosomal protein uL1 family. As to quaternary structure, part of the 50S ribosomal subunit.

Its function is as follows. Binds directly to 23S rRNA. The L1 stalk is quite mobile in the ribosome, and is involved in E site tRNA release. Functionally, protein L1 is also a translational repressor protein, it controls the translation of the L11 operon by binding to its mRNA. The polypeptide is Large ribosomal subunit protein uL1 (Anaplasma marginale (strain St. Maries)).